The following is a 196-amino-acid chain: Peptidyl-tRNA hydrolase (196 aa).

His15 is a tRNA binding site. His20 (proton acceptor) is an active-site residue. TRNA is bound by residues Tyr66, Asn68, and Asn114.

Belongs to the PTH family. Monomer.

It is found in the cytoplasm. The enzyme catalyses an N-acyl-L-alpha-aminoacyl-tRNA + H2O = an N-acyl-L-amino acid + a tRNA + H(+). Hydrolyzes ribosome-free peptidyl-tRNAs (with 1 or more amino acids incorporated), which drop off the ribosome during protein synthesis, or as a result of ribosome stalling. Its function is as follows. Catalyzes the release of premature peptidyl moieties from peptidyl-tRNA molecules trapped in stalled 50S ribosomal subunits, and thus maintains levels of free tRNAs and 50S ribosomes. The protein is Peptidyl-tRNA hydrolase of Polynucleobacter necessarius subsp. necessarius (strain STIR1).